Consider the following 405-residue polypeptide: 5-azacytidine-induced protein 2 (405 aa).

A homodimerization region spans residues 1–198 (MDTLVEDDIC…TELQKARQTG (198 aa)). The stretch at 40 to 197 (ALVTAYEDIK…RTELQKARQT (158 aa)) forms a coiled coil. The segment at 229–270 (SDNMQHAYWELKREMSNLHLVTQVQAELLRKLKTSAAVKKAC) is interaction with TBK1 and IKBKE. Residues S331 and S366 each carry the phosphoserine modification. A disordered region spans residues 357 to 377 (LEDNSWVFPSPPKSSETAFGE).

In terms of assembly, homodimer. Interacts with IKBKE and TBK1. Interacts with TICAM1. Interacts with TAX1BP1. Interacts with CALCOCO2. Ubiquitinated via 'Lys-48'-linked polyubiquitination by TRIM38, leading to its degradation. In terms of tissue distribution, testis, ovary, heart, lung, kidney and brain. Expressed mainly in the spermatocytes or spermatids in the testis.

Its subcellular location is the cytoplasm. Adapter protein which binds TBK1 and IKBKE playing a role in antiviral innate immunity. Activates serine/threonine-protein kinase TBK1 and facilitates its oligomerization. Enhances the phosphorylation of NF-kappa-B p65 subunit RELA by TBK1. Promotes TBK1-induced as well as TNF-alpha or PMA-induced activation of NF-kappa-B. Participates in IFNB promoter activation via TICAM1. The sequence is that of 5-azacytidine-induced protein 2 (Azi2) from Mus musculus (Mouse).